We begin with the raw amino-acid sequence, 419 residues long: MTKIAYLECPSGIAGDMCLGSLVDSGVPLEYLIEQLKKLEIQDEYRLWSEKVYRQGQLATKVHVELVEHDPSNHPSQNTHHHHHHHTRHLPEIESMIKGANLPPQSREWSLAVFRQLAIAEGAVHGIEPEKVHFHEVGAIDAIIDIVGTCLGLDWLGIEALYCSEMPTGGGTVWAAHGRLPVPVPAVIKLWESRQVPVYSNNINKELVTPTGAAIAVTLAKHFGSPPAMKVQKIGLGAGSNELPIPNILRLWIGESNNPDQVQQLSEKIAVLETQIDDLNPQVIGYVFEALLAAGALDVFTQAIGMKKSRPGILLTVICTPEKVADCQNIIFKETTTLGIRHRIQNRSILQREIQQITTDYGVARVKIASQGIGDNKTILNVQAEYEDCVELALKSNQPLQIIQQIVLNTWYHQNCLKI.

The tract at residues 69-90 (HDPSNHPSQNTHHHHHHHTRHL) is disordered. A compositionally biased stretch (basic residues) spans 79–88 (THHHHHHHTR).

It belongs to the LarC family.

This Rippkaea orientalis (strain PCC 8801 / RF-1) (Cyanothece sp. (strain PCC 8801)) protein is Putative nickel insertion protein.